A 209-amino-acid polypeptide reads, in one-letter code: Immunoglobulin lambda-like polypeptide 1 (209 aa).

The first 30 residues, 1–30 (MKLRVGQTLGTIPRQCEVLLLLLLLGLVDG), serve as a signal peptide directing secretion. Residues 93–104 (VFGGGTQLTILG) form a j region region. The tract at residues 105–209 (QPKSDPLVTL…EKSVSPAECS (105 aa)) is c region. The 95-residue stretch at 110-204 (PLVTLFLPSL…EGNTVEKSVS (95 aa)) folds into the Ig-like C1-type domain. Cys-131 and Cys-190 form a disulfide bridge.

Interacts with VPREB1A. Interacts with SYNV1/HRD1 (via N-terminus); this interaction leads to increased IGLL1 ubiquitination and degradation in pre-B cells, possibly through a lysosomal, not proteasomal, pathway. In terms of tissue distribution, selectively expressed in pre-B lymphocytes.

It is found in the endoplasmic reticulum. It localises to the secreted. Critical for B-cell development. The protein is Immunoglobulin lambda-like polypeptide 1 (Igll1) of Mus musculus (Mouse).